An 85-amino-acid polypeptide reads, in one-letter code: Defensin-like protein 11 (85 aa).

Positions 1 to 29 (MGKTISFSAIILVFLLVSTGLMKQGDAQA) are cleaved as a signal peptide. Cystine bridges form between Cys32-Cys84, Cys44-Cys68, Cys54-Cys75, and Cys58-Cys77.

It belongs to the DEFL family.

The protein localises to the secreted. This Arabidopsis thaliana (Mouse-ear cress) protein is Defensin-like protein 11.